The primary structure comprises 437 residues: MTSFSPREIVSELDRYIVGQHEAKRAVAIALRNRWRRQQLPEGLREEVLPKNILMIGPTGVGKTEIARRLARLAQAPFLKVEATKFTEVGYVGRDVEQIIRDLVEIAIGLTRERLRKEVASKAELRAEDRVLEALVGANASGETRQKFRKMLREGQLNDREIEIQVQDTSVQGLPTFDVPGMPGAQMGMINLGDIFGKALGGRTKVRRMSVSESYDVLMAEESDKLLDQEKVVSEAIQSVEQNGIVFLDEIDKITARSEVRGGADVSREGVQRDLLPLIEGTTVNTKHGPVKTDHVLFIASGAFHLAKPSDLLPELQGRLPIRVELKALSQEDFRRILTEPEASLIKQYKALLATEGMTLDFTDDGIDELARLAADINRSVENIGARRLHTVLERLLEEISFTASDRSGESVTIDAAYVRGQLQGLAQNTDLSKFIL.

ATP contacts are provided by residues valine 18, 60–65 (GVGKTE), aspartate 249, glutamate 315, and arginine 387.

Belongs to the ClpX chaperone family. HslU subfamily. As to quaternary structure, a double ring-shaped homohexamer of HslV is capped on each side by a ring-shaped HslU homohexamer. The assembly of the HslU/HslV complex is dependent on binding of ATP.

The protein resides in the cytoplasm. In terms of biological role, ATPase subunit of a proteasome-like degradation complex; this subunit has chaperone activity. The binding of ATP and its subsequent hydrolysis by HslU are essential for unfolding of protein substrates subsequently hydrolyzed by HslV. HslU recognizes the N-terminal part of its protein substrates and unfolds these before they are guided to HslV for hydrolysis. The sequence is that of ATP-dependent protease ATPase subunit HslU from Rhodospirillum centenum (strain ATCC 51521 / SW).